Here is a 37-residue protein sequence, read N- to C-terminus: Cytochrome b6-f complex subunit 5 (37 aa).

The helical transmembrane segment at 5 to 25 threads the bilayer; the sequence is LLCGIVLGLIPITLMGLFVAA.

Belongs to the PetG family. As to quaternary structure, the 4 large subunits of the cytochrome b6-f complex are cytochrome b6, subunit IV (17 kDa polypeptide, PetD), cytochrome f and the Rieske protein, while the 4 small subunits are PetG, PetL, PetM and PetN. The complex functions as a dimer.

It is found in the cellular thylakoid membrane. Functionally, component of the cytochrome b6-f complex, which mediates electron transfer between photosystem II (PSII) and photosystem I (PSI), cyclic electron flow around PSI, and state transitions. PetG is required for either the stability or assembly of the cytochrome b6-f complex. In Synechococcus sp. (strain CC9311), this protein is Cytochrome b6-f complex subunit 5.